The following is an 84-amino-acid chain: Sec-independent protein translocase protein TatA (84 aa).

A helical transmembrane segment spans residues 4–24 (MSPVHWLILAVVLLVVFGGGG). A disordered region spans residues 46–84 (DDESMTATDATQAPGHISPPNQNPGYSQTTSSETHRNQV). Residues 64–77 (PPNQNPGYSQTTSS) show a composition bias toward polar residues.

The protein belongs to the TatA/E family. In terms of assembly, the Tat system comprises two distinct complexes: a TatABC complex, containing multiple copies of TatA, TatB and TatC subunits, and a separate TatA complex, containing only TatA subunits. Substrates initially bind to the TatABC complex, which probably triggers association of the separate TatA complex to form the active translocon.

It is found in the cell inner membrane. Part of the twin-arginine translocation (Tat) system that transports large folded proteins containing a characteristic twin-arginine motif in their signal peptide across membranes. TatA could form the protein-conducting channel of the Tat system. The protein is Sec-independent protein translocase protein TatA of Gluconobacter oxydans (strain 621H) (Gluconobacter suboxydans).